Here is a 293-residue protein sequence, read N- to C-terminus: MLKGSITALVTPFDREGAFDEKAFRAFVNWQIEEGTKGLVPVGTTGETPTLSHDEHKRVIEVCIEVAAGRVPVIAGAGSNNTVEAIELAQHAEKAGADAVLVVTPYYNKPNQRGLYEHFSRVVRSISIPLVIYNIPGRSIIDMTPETMGALVRDCKNIVGVKDATGKIERVSEQRAICGKEFIQLSGEDATALGFNAHGGVGCISVTSNIAPRLCAEFQEACQAGNFAKALELQDRLMPLHKALFLEPNPSGPKYALSRLGRIENVLRSPMVTIEAATAEKIDHAMKHAGLIN.

T45 provides a ligand contact to pyruvate. Y133 acts as the Proton donor/acceptor in catalysis. K162 serves as the catalytic Schiff-base intermediate with substrate. Residue I204 coordinates pyruvate.

This sequence belongs to the DapA family. As to quaternary structure, homotetramer; dimer of dimers.

The protein resides in the cytoplasm. The enzyme catalyses L-aspartate 4-semialdehyde + pyruvate = (2S,4S)-4-hydroxy-2,3,4,5-tetrahydrodipicolinate + H2O + H(+). It functions in the pathway amino-acid biosynthesis; L-lysine biosynthesis via DAP pathway; (S)-tetrahydrodipicolinate from L-aspartate: step 3/4. In terms of biological role, catalyzes the condensation of (S)-aspartate-beta-semialdehyde [(S)-ASA] and pyruvate to 4-hydroxy-tetrahydrodipicolinate (HTPA). This is 4-hydroxy-tetrahydrodipicolinate synthase from Brucella suis biovar 1 (strain 1330).